Reading from the N-terminus, the 364-residue chain is Mitoferrin-2 (364 aa).

A compositionally biased stretch (gly residues) spans 1 to 17; the sequence is MELEGRGAGGVAGGPAA. 2 disordered regions span residues 1-28 and 40-60; these read MELEGRGAGGVAGGPAAGPGRSPGESAL and GAGGGEAGACRPPVRQDPDSG. Low complexity predominate over residues 18-27; that stretch reads GPGRSPGESA. Solcar repeat units lie at residues 70 to 158, 168 to 252, and 259 to 352; these read ATVT…LKKT, NSHI…LQEH, and YNPS…FKYL. 6 consecutive transmembrane segments (helical) span residues 72–91, 133–152, 170–189, 227–246, 261–280, and 327–346; these read VTTHMVAGAVAGILEHCVMY, GLNVTATGAGPAHALYFACY, HIANGAAGCVATLLHDAAMN, SYTTQLTMNVPFQAIHFMTY, PSSHVLSGACAGAVAAAATT, and GVQARVIYQIPSTAIAWSVY.

Belongs to the mitochondrial carrier (TC 2.A.29) family. As to expression, ubiquitous. Expressed in placenta, lung, kidney, pancreas, liver, brain, skeletal muscle and heart.

The protein resides in the mitochondrion inner membrane. The enzyme catalyses Fe(2+)(in) = Fe(2+)(out). Mitochondrial iron transporter that mediates iron uptake. Probably required for heme synthesis of hemoproteins and Fe-S cluster assembly in non-erythroid cells. The chain is Mitoferrin-2 (SLC25A28) from Homo sapiens (Human).